The primary structure comprises 220 residues: Probable nicotinate-nucleotide adenylyltransferase (220 aa).

It belongs to the NadD family.

It carries out the reaction nicotinate beta-D-ribonucleotide + ATP + H(+) = deamido-NAD(+) + diphosphate. It functions in the pathway cofactor biosynthesis; NAD(+) biosynthesis; deamido-NAD(+) from nicotinate D-ribonucleotide: step 1/1. Its function is as follows. Catalyzes the reversible adenylation of nicotinate mononucleotide (NaMN) to nicotinic acid adenine dinucleotide (NaAD). The protein is Probable nicotinate-nucleotide adenylyltransferase of Laribacter hongkongensis (strain HLHK9).